The sequence spans 314 residues: Cyclin-dependent kinase 2 (314 aa).

The 280-residue stretch at 8-287 folds into the Protein kinase domain; it reads FQRAEKIGEG…AKDALQHAYF (280 aa). ATP contacts are provided by residues 14–22 and Lys-37; that span reads IGEGTYGIV. Thr-18 bears the Phosphothreonine mark. A Phosphotyrosine modification is found at Tyr-19. The active-site Proton acceptor is the Asp-130. Tyr-162 carries the phosphotyrosine modification. Residue Thr-163 is modified to Phosphothreonine.

It belongs to the protein kinase superfamily. CMGC Ser/Thr protein kinase family. CDC2/CDKX subfamily. Interacts with cyclin CycG.

The catalysed reaction is L-seryl-[protein] + ATP = O-phospho-L-seryl-[protein] + ADP + H(+). It carries out the reaction L-threonyl-[protein] + ATP = O-phospho-L-threonyl-[protein] + ADP + H(+). The enzyme catalyses [DNA-directed RNA polymerase] + ATP = phospho-[DNA-directed RNA polymerase] + ADP + H(+). In terms of biological role, like Cdk1, could play a key role in the control of the eukaryotic cell cycle. The protein is Cyclin-dependent kinase 2 of Drosophila melanogaster (Fruit fly).